The primary structure comprises 560 residues: SET domain-containing protein 4 (560 aa).

Disordered regions lie at residues 1 to 61 and 125 to 157; these read MTSP…PSPQ and KKQNQDDNSKVSVTHNESSKENKITPSMRAEDN. Residues 26–38 show a composition bias toward low complexity; that stretch reads SRSSSYSSNSSMS. Over residues 47–59 the composition is skewed to polar residues; that stretch reads LSVSSAASETLPS. Residues 141–157 are compositionally biased toward basic and acidic residues; that stretch reads ESSKENKITPSMRAEDN. Residues 160 to 210 form a PHD-type zinc finger; the sequence is KNGCICGSSDSKDELFIQCNKCKTWQHKLCYAFKKSDPIKRDFVCKRCDSD. The region spanning 346–475 is the SET domain; that stretch reads ADIEVRKSSN…KGEEISVEWQ (130 aa).

The protein belongs to the SET3 family.

Its function is as follows. Putative chromatin regulator. The chain is SET domain-containing protein 4 (SET4) from Saccharomyces cerevisiae (strain ATCC 204508 / S288c) (Baker's yeast).